Consider the following 91-residue polypeptide: Small ribosomal subunit protein uS19 (91 aa).

It belongs to the universal ribosomal protein uS19 family.

Its function is as follows. Protein S19 forms a complex with S13 that binds strongly to the 16S ribosomal RNA. This chain is Small ribosomal subunit protein uS19, found in Pseudomonas fluorescens (strain Pf0-1).